The sequence spans 379 residues: F-box protein At1g67340 (379 aa).

Residues 41–92 (ADLLDSIPDDLVISILCKLGSTSRCPADFINVLLTCKRLKGLAMNPIVLSRL) enclose the F-box domain. Zn(2+)-binding residues include His304, Cys307, Cys320, Cys323, Cys329, Cys333, His342, and Cys346. The MYND-type; atypical zinc finger occupies 304 to 346 (HAGCGRPETRKHEFRRCSVCGVVNYCSRACQALDWKLRHKMDC). The segment at 358-379 (GGEGNVQIDGNGNGDNVLLPMS) is disordered.

As to quaternary structure, part of a SCF (ASK-cullin-F-box) protein ligase complex. Interacts with SKP1A/ASK1, SKP1B/ASK2, ASK4, ASK11 and ASK13.

It is found in the nucleus. The protein operates within protein modification; protein ubiquitination. In terms of biological role, component of SCF(ASK-cullin-F-box) E3 ubiquitin ligase complexes, which may mediate the ubiquitination and subsequent proteasomal degradation of target proteins. The chain is F-box protein At1g67340 from Arabidopsis thaliana (Mouse-ear cress).